The following is a 999-amino-acid chain: Desmoglein-3 (999 aa).

The N-terminal stretch at 1–23 (MMGLFPRTTGALAIFVVVILVHG) is a signal peptide. Positions 24–49 (ELRIETKGQYDEEEMTMQQAKRRQKR) are excised as a propeptide. 4 Cadherin domains span residues 50-158 (EWVK…PVFS), 159-268 (QQIF…PMFR), 269-383 (DSQY…GIAF), and 386-499 (ASKT…VLEK). Residues 50–615 (EWVKFAKPCR…TRYGRPHSGR (566 aa)) are Extracellular-facing. N-linked (GlcNAc...) asparagine glycosylation is found at Asn110 and Asn180. Residues Asn459 and Asn545 are each glycosylated (N-linked (GlcNAc...) asparagine). Residues 616–640 (LGPAAIGLLLLGLLLLLLAPLLLLT) traverse the membrane as a helical segment. Residues 641-999 (CDCGAGSTGG…CTEDPCSRLI (359 aa)) are Cytoplasmic-facing. The required for interaction with CTNND1 and localization at cell-cell junctions stretch occupies residues 642–714 (DCGAGSTGGV…NTYARGTAVE (73 aa)). Desmoglein repeat repeat units lie at residues 910–935 (LSTS…LVTE) and 936–966 (TYSA…ERVI).

In terms of assembly, homodimer. Part of a complex that contains DSG3, PKP1, YAP1 and YWHAG; the complex is required for localization of DSG3 and YAP1 to the cell membrane in keratinocytes. Interacts with PKP2. Interacts with CTNND1; the interaction facilitates DSG3 localization and retention at cell-cell junctions. Interacts with CDH1; the interaction is required for CDH1 localization to developing adherens junctions. Interacts with RAC1; the interaction is required for DSG3 translocation to cell-cell junctions, organization of cortical F-actin bundles and actin anchoring at cell-cell junctions. Interacts with DSC3; the interaction may limit the interaction of DSC3 with p38MAPK family members and therefore repress p38MAPK signaling activation. Expressed throughout the basal and spinous layer of the epidermis with weak expression in the granular layer (at protein level). Expressed in skin and mucosa (at protein level). Expressed in the basal layer of the outer root sheath of the telogen hair club, specifically at the cell membrane between the apex of the cells and the surrounding hair club (at protein level). Expression is less abundant between the lateral margins of the outer root sheath basal cells (at protein level). Also expressed in the tongue, tonsil and esophagus.

The protein localises to the cell membrane. It is found in the cell junction. The protein resides in the desmosome. It localises to the cytoplasm. Its subcellular location is the tight junction. In terms of biological role, a component of desmosome cell-cell junctions which are required for positive regulation of cellular adhesion. Required for adherens and desmosome junction assembly in response to mechanical force in keratinocytes. Required for desmosome-mediated cell-cell adhesion of cells surrounding the telogen hair club and the basal layer of the outer root sheath epithelium, consequently is essential for the anchoring of telogen hairs in the hair follicle. Required for the maintenance of the epithelial barrier via promoting desmosome-mediated intercellular attachment of suprabasal epithelium to basal cells. May play a role in the protein stability of the desmosome plaque components DSP, JUP, PKP1, PKP2 and PKP3. Required for YAP1 localization at the plasma membrane in keratinocytes in response to mechanical strain, via the formation of an interaction complex composed of DSG3, PKP1 and YWHAG. May also be involved in the positive regulation of YAP1 target gene transcription and as a result cell proliferation. Positively regulates cellular contractility and cell junction formation via organization of cortical F-actin bundles and anchoring of actin to tight junctions, in conjunction with RAC1. The cytoplasmic pool of DSG3 is required for the localization of CDH1 and CTNNB1 at developing adherens junctions, potentially via modulation of SRC activity. Inhibits keratinocyte migration via suppression of p38MAPK signaling, may therefore play a role in moderating wound healing. This is Desmoglein-3 from Homo sapiens (Human).